The chain runs to 54 residues: Large ribosomal subunit protein bL33A (54 aa).

Belongs to the bacterial ribosomal protein bL33 family.

The protein is Large ribosomal subunit protein bL33A of Myxococcus xanthus (strain DK1622).